The chain runs to 90 residues: Small ribosomal subunit protein uS15c (90 aa).

It belongs to the universal ribosomal protein uS15 family. In terms of assembly, part of the 30S ribosomal subunit.

It localises to the plastid. It is found in the chloroplast. The polypeptide is Small ribosomal subunit protein uS15c (rps15) (Drimys granadensis).